Consider the following 102-residue polypeptide: Large ribosomal subunit protein mL63 (102 aa).

It belongs to the mitochondrion-specific ribosomal protein mL63 family.

It is found in the mitochondrion. The protein is Large ribosomal subunit protein mL63 (Mrpl57) of Mus musculus (Mouse).